The sequence spans 219 residues: 2-hydroxy-3-keto-5-methylthiopentenyl-1-phosphate phosphatase (219 aa).

It belongs to the HAD-like hydrolase superfamily. MtnX family.

It carries out the reaction 2-hydroxy-5-methylsulfanyl-3-oxopent-1-enyl phosphate + H2O = 1,2-dihydroxy-5-(methylsulfanyl)pent-1-en-3-one + phosphate. It participates in amino-acid biosynthesis; L-methionine biosynthesis via salvage pathway; L-methionine from S-methyl-5-thio-alpha-D-ribose 1-phosphate: step 4/6. Dephosphorylates 2-hydroxy-3-keto-5-methylthiopentenyl-1-phosphate (HK-MTPenyl-1-P) yielding 1,2-dihydroxy-3-keto-5-methylthiopentene (DHK-MTPene). The sequence is that of 2-hydroxy-3-keto-5-methylthiopentenyl-1-phosphate phosphatase from Bacillus cereus (strain G9842).